We begin with the raw amino-acid sequence, 65 residues long: Large ribosomal subunit protein bL31 (65 aa).

Zn(2+) contacts are provided by Cys-16, Cys-18, Cys-36, and Cys-39.

This sequence belongs to the bacterial ribosomal protein bL31 family. Type A subfamily. Part of the 50S ribosomal subunit. Zn(2+) is required as a cofactor.

Its function is as follows. Binds the 23S rRNA. This Alkaliphilus metalliredigens (strain QYMF) protein is Large ribosomal subunit protein bL31.